Consider the following 434-residue polypeptide: Histidine--tRNA ligase (434 aa).

It belongs to the class-II aminoacyl-tRNA synthetase family. As to quaternary structure, homodimer.

It localises to the cytoplasm. The catalysed reaction is tRNA(His) + L-histidine + ATP = L-histidyl-tRNA(His) + AMP + diphosphate + H(+). The sequence is that of Histidine--tRNA ligase from Chlorobium phaeobacteroides (strain BS1).